The primary structure comprises 372 residues: Beta-1,3-N-acetylglucosaminyltransferase radical fringe (372 aa).

The Cytoplasmic segment spans residues 1-10 (MNSSCLGLRR). A helical; Signal-anchor for type II membrane protein transmembrane segment spans residues 11-27 (TCFLLSVTAAAVLLLLL). At 28–372 (PRGQPPAAPR…TIWCPNKKMS (345 aa)) the chain is on the lumenal side. Residues 30–48 (GQPPAAPRRRPPPAGPSRP) show a composition bias toward pro residues. Residues 30 to 96 (GQPPAAPRRR…RVRMGPPGGS (67 aa)) are disordered. Residues 64 to 78 (DRGGGSGAAGGGRGV) are compositionally biased toward gly residues. Arg120 serves as a coordination point for substrate. The N-linked (GlcNAc...) asparagine glycan is linked to Asn159. 2 cysteine pairs are disulfide-bonded: Cys160/Cys171 and Cys189/Cys253. Asp193 contacts substrate. Asp194 provides a ligand contact to Mn(2+). Residue Asp283 is part of the active site. His307 serves as a coordination point for Mn(2+). Residues Cys357 and Cys366 are joined by a disulfide bond.

It belongs to the glycosyltransferase 31 family. The cofactor is Mn(2+).

The protein resides in the golgi apparatus membrane. The enzyme catalyses 3-O-(alpha-L-fucosyl)-L-threonyl-[EGF-like domain protein] + UDP-N-acetyl-alpha-D-glucosamine = 3-O-(N-acetyl-beta-D-glucosaminyl-(1-&gt;3)-alpha-L-fucosyl)-L-threonyl-[EGF-like domain protein] + UDP + H(+). It catalyses the reaction 3-O-(alpha-L-fucosyl)-L-seryl-[EGF-like domain protein] + UDP-N-acetyl-alpha-D-glucosamine = 3-O-(N-acetyl-beta-D-glucosaminyl-(1-&gt;3)-alpha-L-fucosyl)-L-seryl-[EGF-like domain protein] + UDP + H(+). Glycosyltransferase that initiates the elongation of O-linked fucose residues attached to EGF-like repeats in the extracellular domain of Notch molecules. Plays an important role in limb outgrowth, it directs the formation and positioning of the apical ectodermal ridge (AER), one of the key organizer centers of vertebrate limb development. This Gallus gallus (Chicken) protein is Beta-1,3-N-acetylglucosaminyltransferase radical fringe (RFNG).